A 579-amino-acid chain; its full sequence is MNTAPSRPSPTRRDPYSFGDSRDTRRDRSPIRGSPRREPRDGRNGRDARDSRDIRDPRDLRDRRDSRDIRDHRDSRSVREARDLRDFRDFRDLRDSRDFRDHRDPVYDRYRDIRDSRDPLYRREGSYDRYLRVDDYCRRKDDSYFDRYRDSFDGRGPPGPESQSRAKERLKREERRREELYRRYFEEIQRRFDAERPVDCSVIVVNKQTKDYAESVGRKVRDLGMVVDLIFLNTEVSLSQALEDVSRGGSPFAIVITQQHQIHRSCTVNIMFGTPQEHRNMPQADAMVLVARNYERYKNDCREKEREEIARQAAKMANDAILQERDRGGPEEGGRGGHPPAIQSLINLLADNRYLTAEETDKIINYLRERKERLLRSSADSLPGPISRQPLGAASGSSLKSQPSSQPLQSGQVLPSATPTPAAPPTSQQELQAKILSLFNSGAVAANSSSASPSVATGSSQNQNFSTAANSQPQQRPQASGNQPPNIVGQAGSARNMGPRPGAPSQGLFGQPSSRLAPASTMASQRPVSSTGINFDNPSVQKALDTLIQSGPALSHLVSQTAAQVGRPQAPMGSYQRHY.

An N-acetylmethionine modification is found at Met1. The segment at 1–77 (MNTAPSRPSP…DIRDHRDSRS (77 aa)) is disordered. Residues 1–158 (MNTAPSRPSP…RDSFDGRGPP (158 aa)) are transcription repression. Thr3 bears the Phosphothreonine mark. A phosphoserine mark is found at Ser9, Ser21, Ser29, Ser34, Ser96, Ser116, Ser126, Ser143, and Ser151. Over residues 11–77 (TRRDPYSFGD…DIRDHRDSRS (67 aa)) the composition is skewed to basic and acidic residues. Positions 148–172 (YRDSFDGRGPPGPESQSRAKERLKR) are disordered. Position 274 is a phosphothreonine (Thr274). The LXXLL motif motif lies at 345 to 349 (LINLL). Residues Ser378 and Ser381 each carry the phosphoserine modification. Disordered stretches follow at residues 378-428 (SADS…PTSQ) and 446-529 (ANSS…RPVS). Composition is skewed to low complexity over residues 395 to 420 (SGSSLKSQPSSQPLQSGQVLPSATPT) and 446 to 460 (ANSSSASPSVATGSS). The transcription activation stretch occupies residues 458 to 579 (GSSQNQNFST…APMGSYQRHY (122 aa)). Over residues 461-485 (QNQNFSTAANSQPQQRPQASGNQPP) the composition is skewed to polar residues.

Binds HTATIP2/TIP30. Interacts with YLPM1. Forms a complex with ILF2, ILF3, YLPM1, KHDRBS1, RBMX and PPP1CA.

The protein resides in the nucleus. Its function is as follows. Nuclear receptor coregulator that can have both coactivator and corepressor functions. Interacts with nuclear receptors for steroids (ESR1 and ESR2) independently of the steroid binding domain (AF-2) of the ESR receptors, and with the orphan nuclear receptor NR1D2. Involved in the coactivation of nuclear steroid receptors (ER) as well as the corepression of MYC in response to 17-beta-estradiol (E2). The polypeptide is Nuclear receptor coactivator 5 (Ncoa5) (Mus musculus (Mouse)).